Consider the following 92-residue polypeptide: Small ribosomal subunit protein uS19 (92 aa).

This sequence belongs to the universal ribosomal protein uS19 family.

Protein S19 forms a complex with S13 that binds strongly to the 16S ribosomal RNA. This Polaromonas naphthalenivorans (strain CJ2) protein is Small ribosomal subunit protein uS19.